Here is a 1682-residue protein sequence, read N- to C-terminus: 1-phosphatidylinositol 4,5-bisphosphate phosphodiesterase eta-1 (1682 aa).

One can recognise a PH domain in the interval 20–128 (SVMQSGTQMI…WITGLKYLMA (109 aa)). EF-hand domains lie at 142-177 (THDQ…LNVN), 178-214 (LPRR…MSLR), and 226-246 (DKKD…EQKM). 4 residues coordinate Ca(2+): D155, N157, D159, and E166. Residues 299–444 (QDMDQPLCNY…LKGKILVKGK (146 aa)) enclose the PI-PLC X-box domain. H314 is an active-site residue. N315, E344, and D346 together coordinate Ca(2+). H358 is a catalytic residue. Residue E393 participates in Ca(2+) binding. 2 residues coordinate substrate: K442 and K444. The disordered stretch occupies residues 534-588 (LDVKESGKKSHGRSLMANFGKHKQKATKSRSKSYSTDDEDDSLQNPGKEGGQLYR). Basic residues predominate over residues 553–564 (GKHKQKATKSRS). Residues 602 to 715 (LSDLVVYTNS…GYILKPQQMC (114 aa)) form the PI-PLC Y-box domain. Positions 628 and 655 each coordinate substrate. The 129-residue stretch at 716–844 (KGTFNPFSGD…PGYRHVYLEG (129 aa)) folds into the C2 domain. Positions 759, 761, 785, 814, 815, and 816 each coordinate Ca(2+). Positions 992-1018 (DTDGKENCLAGDKDDRRKGAATRKDPH) are enriched in basic and acidic residues. Disordered stretches follow at residues 992-1083 (DTDG…LSPR), 1296-1321 (NLPG…HSQV), and 1581-1603 (RAKE…GGVV). Residues 1019 to 1033 (FSNFNKKLSSSSSAL) show a composition bias toward low complexity. 2 stretches are compositionally biased toward polar residues: residues 1040 to 1050 (QGPTASVSNPE) and 1065 to 1074 (NMTNDCQENH). The segment covering 1581–1590 (RAKEKQEAGK) has biased composition (basic and acidic residues).

It depends on Ca(2+) as a cofactor. In terms of tissue distribution, expressed in brain and to a lower extent in lung. In brain, it is found in cerebrum, cerebellum and spinal cord.

It is found in the cytoplasm. Its subcellular location is the membrane. The enzyme catalyses a 1,2-diacyl-sn-glycero-3-phospho-(1D-myo-inositol-4,5-bisphosphate) + H2O = 1D-myo-inositol 1,4,5-trisphosphate + a 1,2-diacyl-sn-glycerol + H(+). The production of the second messenger molecules diacylglycerol (DAG) and inositol 1,4,5-trisphosphate (IP3) is mediated by calcium-activated phosphatidylinositol-specific phospholipase C enzymes. The protein is 1-phosphatidylinositol 4,5-bisphosphate phosphodiesterase eta-1 of Mus musculus (Mouse).